Reading from the N-terminus, the 515-residue chain is Cytoplasmic dynein 1 light intermediate chain 1 (515 aa).

The segment covering 1–24 has biased composition (low complexity); sequence MAAVGRAGSFGSSSASGAANNASA. The tract at residues 1-34 is disordered; sequence MAAVGRAGSFGSSSASGAANNASAELRAGGEEDD. 64–71 contributes to the ATP binding site; the sequence is GEDGAGKT. Disordered stretches follow at residues 370-424 and 445-515; these read QSQL…DPNM and KTGS…GEAS. The segment covering 397–409 has biased composition (polar residues); that stretch reads RTPNRSVTSNVAS. Residues 448 to 468 are compositionally biased toward gly residues; the sequence is SPGGPGGVGGSPGGGSAGGTG. Basic and acidic residues predominate over residues 490–499; that stretch reads ELDRISRKPE. Residues 502-515 are compositionally biased toward polar residues; the sequence is SPTSPTSPTEGEAS.

It belongs to the dynein light intermediate chain family. In terms of assembly, homodimer. The cytoplasmic dynein 1 complex consists of two catalytic heavy chains (HCs) and a number of non-catalytic subunits presented by intermediate chains (ICs). In terms of processing, phosphorylated.

It localises to the cytoplasm. The protein resides in the cytoskeleton. It is found in the chromosome. Its subcellular location is the centromere. The protein localises to the kinetochore. It localises to the spindle pole. The protein resides in the recycling endosome membrane. In terms of biological role, acts as one of several non-catalytic accessory components of the cytoplasmic dynein 1 complex that are thought to be involved in linking dynein to cargos and to adapter proteins that regulate dynein function. Cytoplasmic dynein 1 acts as a motor for the intracellular retrograde motility of vesicles and organelles along microtubules. May play a role in binding dynein to membranous organelles or chromosomes. May regulate the movement of peripheral sorting endosomes along microtubule tracks toward the microtubule organizing center/centrosome, generating the endosomal recycling compartment. The chain is Cytoplasmic dynein 1 light intermediate chain 1 (DYNC1LI1) from Gallus gallus (Chicken).